The following is a 96-amino-acid chain: Large ribosomal subunit protein uL23 (96 aa).

This sequence belongs to the universal ribosomal protein uL23 family. As to quaternary structure, part of the 50S ribosomal subunit. Contacts protein L29, and trigger factor when it is bound to the ribosome.

Functionally, one of the early assembly proteins it binds 23S rRNA. One of the proteins that surrounds the polypeptide exit tunnel on the outside of the ribosome. Forms the main docking site for trigger factor binding to the ribosome. The protein is Large ribosomal subunit protein uL23 of Alkaliphilus oremlandii (strain OhILAs) (Clostridium oremlandii (strain OhILAs)).